Reading from the N-terminus, the 443-residue chain is Tol-Pal system protein TolB (443 aa).

An N-terminal signal peptide occupies residues 1-31 (MMIMTTRTFFSWFIVICAFWLTSFSSVPVHA). The segment at 422–443 (ERQLPTPNDASDPAWSPLLNIQ) is disordered.

Belongs to the TolB family. In terms of assembly, the Tol-Pal system is composed of five core proteins: the inner membrane proteins TolA, TolQ and TolR, the periplasmic protein TolB and the outer membrane protein Pal. They form a network linking the inner and outer membranes and the peptidoglycan layer.

The protein localises to the periplasm. Functionally, part of the Tol-Pal system, which plays a role in outer membrane invagination during cell division and is important for maintaining outer membrane integrity. This is Tol-Pal system protein TolB from Bartonella henselae (strain ATCC 49882 / DSM 28221 / CCUG 30454 / Houston 1) (Rochalimaea henselae).